Consider the following 114-residue polypeptide: Iron-sulfur cluster insertion protein ErpA (114 aa).

Cys42, Cys106, and Cys108 together coordinate iron-sulfur cluster.

The protein belongs to the HesB/IscA family. In terms of assembly, homodimer. Requires iron-sulfur cluster as cofactor.

In terms of biological role, required for insertion of 4Fe-4S clusters for at least IspG. The chain is Iron-sulfur cluster insertion protein ErpA from Erwinia tasmaniensis (strain DSM 17950 / CFBP 7177 / CIP 109463 / NCPPB 4357 / Et1/99).